The following is a 331-amino-acid chain: Ketol-acid reductoisomerase (NADP(+)) (331 aa).

A KARI N-terminal Rossmann domain is found at 4–183 (ATIYYDDDAE…GCTRAGVVET (180 aa)). Residues 27 to 30 (YGSQ), R50, S53, S55, and 85 to 88 (DTVQ) contribute to the NADP(+) site. Residue H109 is part of the active site. NADP(+) is bound at residue G135. One can recognise a KARI C-terminal knotted domain in the interval 184 to 329 (TFREETETDL…EDLRALFAWG (146 aa)). Positions 192, 196, 228, and 232 each coordinate Mg(2+). S253 contacts substrate.

Belongs to the ketol-acid reductoisomerase family. The cofactor is Mg(2+).

It carries out the reaction (2R)-2,3-dihydroxy-3-methylbutanoate + NADP(+) = (2S)-2-acetolactate + NADPH + H(+). The catalysed reaction is (2R,3R)-2,3-dihydroxy-3-methylpentanoate + NADP(+) = (S)-2-ethyl-2-hydroxy-3-oxobutanoate + NADPH + H(+). Its pathway is amino-acid biosynthesis; L-isoleucine biosynthesis; L-isoleucine from 2-oxobutanoate: step 2/4. The protein operates within amino-acid biosynthesis; L-valine biosynthesis; L-valine from pyruvate: step 2/4. Functionally, involved in the biosynthesis of branched-chain amino acids (BCAA). Catalyzes an alkyl-migration followed by a ketol-acid reduction of (S)-2-acetolactate (S2AL) to yield (R)-2,3-dihydroxy-isovalerate. In the isomerase reaction, S2AL is rearranged via a Mg-dependent methyl migration to produce 3-hydroxy-3-methyl-2-ketobutyrate (HMKB). In the reductase reaction, this 2-ketoacid undergoes a metal-dependent reduction by NADPH to yield (R)-2,3-dihydroxy-isovalerate. This is Ketol-acid reductoisomerase (NADP(+)) from Natronomonas pharaonis (strain ATCC 35678 / DSM 2160 / CIP 103997 / JCM 8858 / NBRC 14720 / NCIMB 2260 / Gabara) (Halobacterium pharaonis).